The primary structure comprises 652 residues: Putative asparagine synthetase [glutamine-hydrolyzing] (652 aa).

Cysteine 2 (for GATase activity) is an active-site residue. Residues 2-231 (CGLLAFVAAP…SGCFARIRAD (230 aa)) form the Glutamine amidotransferase type-2 domain. Residues 60-64 (RLSII), 89-91 (NGE), and aspartate 115 contribute to the L-glutamine site. 382-383 (SG) contacts ATP.

It belongs to the asparagine synthetase family.

The catalysed reaction is L-aspartate + L-glutamine + ATP + H2O = L-asparagine + L-glutamate + AMP + diphosphate + H(+). It functions in the pathway amino-acid biosynthesis; L-asparagine biosynthesis; L-asparagine from L-aspartate (L-Gln route): step 1/1. The protein is Putative asparagine synthetase [glutamine-hydrolyzing] (asnB) of Mycobacterium bovis (strain ATCC BAA-935 / AF2122/97).